The sequence spans 77 residues: U14-theraphotoxin-Cg1a 2 (77 aa).

An N-terminal signal peptide occupies residues Met1–Ala21. The propeptide occupies Ser22–Arg49. Intrachain disulfides connect Cys50/Cys64, Cys57/Cys69, and Cys63/Cys75. Lys77 bears the Lysine amide mark.

The protein belongs to the neurotoxin 10 (Hwtx-1) family. 65 (Jztx-21) subfamily. As to expression, expressed by the venom gland.

The protein localises to the secreted. Functionally, probable ion channel inhibitor. In Chilobrachys guangxiensis (Chinese earth tiger tarantula), this protein is U14-theraphotoxin-Cg1a 2.